A 347-amino-acid chain; its full sequence is Ryncolin-2 (347 aa).

The signal sequence occupies residues Met1–Gly19. A disordered region spans residues Leu49–Asp115. In terms of domain architecture, Collagen-like spans Gly57–Gly114. Positions Lys95–Asp115 are enriched in basic and acidic residues. Residues Asp121–Gln341 form the Fibrinogen C-terminal domain. 2 disulfides stabilise this stretch: Cys132/Cys160 and Cys284/Cys297.

The protein belongs to the ficolin lectin family. Veficolin subfamily. In terms of processing, hydroxylated, possibly at Pro-74 and Pro-94. In terms of tissue distribution, expressed by the venom duct.

It localises to the secreted. In terms of biological role, initiates complement activation and/or interferes in platelet aggregation and/or blood coagulation. This Cerberus rynchops (Dog-faced water snake) protein is Ryncolin-2.